The sequence spans 167 residues: Small ribosomal subunit protein uS5 (167 aa).

One can recognise an S5 DRBM domain in the interval 11-74 (LQEKLIAVNR…EKARRNMINV (64 aa)).

This sequence belongs to the universal ribosomal protein uS5 family. Part of the 30S ribosomal subunit. Contacts proteins S4 and S8.

Functionally, with S4 and S12 plays an important role in translational accuracy. Its function is as follows. Located at the back of the 30S subunit body where it stabilizes the conformation of the head with respect to the body. The sequence is that of Small ribosomal subunit protein uS5 from Escherichia coli O139:H28 (strain E24377A / ETEC).